Reading from the N-terminus, the 353-residue chain is Carbamoyl phosphate synthase small chain (353 aa).

The segment at 1 to 166 (MSDAYLALET…AETHGNGDTT (166 aa)) is CPSase. L-glutamine contacts are provided by Ser45, Gly214, and Gly216. The Glutamine amidotransferase type-1 domain maps to 166 to 349 (TVALVDCGAK…LAMADASYTP (184 aa)). Catalysis depends on Cys241, which acts as the Nucleophile. Residues Leu242, Gln245, Asn283, Gly285, and Tyr286 each contribute to the L-glutamine site. Residues His322 and Glu324 contribute to the active site.

The protein belongs to the CarA family. Composed of two chains; the small (or glutamine) chain promotes the hydrolysis of glutamine to ammonia, which is used by the large (or ammonia) chain to synthesize carbamoyl phosphate. Tetramer of heterodimers (alpha,beta)4.

The catalysed reaction is hydrogencarbonate + L-glutamine + 2 ATP + H2O = carbamoyl phosphate + L-glutamate + 2 ADP + phosphate + 2 H(+). It carries out the reaction L-glutamine + H2O = L-glutamate + NH4(+). Its pathway is amino-acid biosynthesis; L-arginine biosynthesis; carbamoyl phosphate from bicarbonate: step 1/1. It participates in pyrimidine metabolism; UMP biosynthesis via de novo pathway; (S)-dihydroorotate from bicarbonate: step 1/3. Its function is as follows. Small subunit of the glutamine-dependent carbamoyl phosphate synthetase (CPSase). CPSase catalyzes the formation of carbamoyl phosphate from the ammonia moiety of glutamine, carbonate, and phosphate donated by ATP, constituting the first step of 2 biosynthetic pathways, one leading to arginine and/or urea and the other to pyrimidine nucleotides. The small subunit (glutamine amidotransferase) binds and cleaves glutamine to supply the large subunit with the substrate ammonia. The protein is Carbamoyl phosphate synthase small chain of Halobacterium salinarum (strain ATCC 29341 / DSM 671 / R1).